The sequence spans 396 residues: Elongation factor Tu (396 aa).

Positions Lys-10 to Glu-206 constitute a tr-type G domain. Residues Gly-19–Thr-26 form a G1 region. Gly-19–Thr-26 is a binding site for GTP. Mg(2+) is bound at residue Thr-26. The G2 stretch occupies residues Gly-60 to Asn-64. Residues Asp-81–Gly-84 are G3. GTP is bound by residues Asp-81–His-85 and Asn-136–Asp-139. Residues Asn-136–Asp-139 are G4. Positions Ser-174–Lys-176 are G5.

Belongs to the TRAFAC class translation factor GTPase superfamily. Classic translation factor GTPase family. EF-Tu/EF-1A subfamily. As to quaternary structure, monomer.

The protein localises to the cytoplasm. It carries out the reaction GTP + H2O = GDP + phosphate + H(+). Its function is as follows. GTP hydrolase that promotes the GTP-dependent binding of aminoacyl-tRNA to the A-site of ribosomes during protein biosynthesis. In Polaromonas naphthalenivorans (strain CJ2), this protein is Elongation factor Tu.